We begin with the raw amino-acid sequence, 443 residues long: Diels-Alderase poxQ (443 aa).

The signal sequence occupies residues 1 to 23 (MARIPLEFLSITLPVLLLAYCLA). 3 N-linked (GlcNAc...) asparagine glycosylation sites follow: Asn-78, Asn-97, and Asn-145.

This sequence belongs to the Diels-Alderase family.

It functions in the pathway secondary metabolite biosynthesis. In terms of biological role, diels-Alderase; part of the gene cluster that mediates the biosynthesis of oxaleimides, cytotoxic compounds containing an unusual disubstituted succinimide moiety. The first step of the pathway is provided by the HR-PKS poxF that serves in a new mode of collaborative biosynthesis with the PKS-NRPS poxE, by providing the olefin containing amino acid substrate via the synthesis of an ACP-bound dec-4-enoate. The cytochrome P450 monooxygenase poxM-catalyzed oxidation at the alpha-position creates the enzyme-bound 2-hydroxydec-4-enoyl-ACP thioester, which may be prone to spontaneous hydrolysis to yield 2-hydroxydec-4-enoic acid due to increased electrophilicity of the carbonyl. 2-hydroxydec-4-enoic acid can then be further oxidized by poxM to yield the alpha-ketoacid 2-oxodec-4-enoicacid, which is reductively aminated by the aminotransferase poxL to yield (S,E)-2-aminodec-4-enoic acid. The Hybrid PKS-NRPS synthetase poxE then performs condensation between the octaketide product of its PKS modules and the amino group of (S,E)-2-aminodec-4-enoic acid which is activated and incorporated by the adenylation domain. The resulting aminoacyl product can be cyclized by the Diels-Alderase PoxQ and reductively released by the reductive (R) domain of poxE to yield an aldehyde intermediate. The released aldehyde is then substrate for a Knoevenagel condensation by the hydrolyase poxO followed by an oxidation at the 5-position of the pyrrolidone ring. The presence of the olefin from the amino acid building block allows for migration of the substituted allyl group to occur. This allylic transposition reaction takes place in a conjugate addition, semipinacol-like fashion to yield a succinimide intermediate. Iterative two-electron oxidations of the C7 methyl of the succinimide intermediate to the carboxylic acid can be catalyzed by one of two remaining cytochrome P450 monooxygenasess poxC or poxD to yield oxaleimide A. Subsequent oxidation yields the maleimide scaffold oxaleimide I. Both oxaleimide A and oxaleimide I can undergo oxidative modifications in the decalin ring to yield the series of products oxaleimides B to H. This chain is Diels-Alderase poxQ, found in Penicillium oxalicum.